The primary structure comprises 125 residues: Cu-Zn superoxide dismutase-like protein OPG175 (125 aa).

Residues Cys52 and Cys102 are joined by a disulfide bond.

It belongs to the Cu-Zn superoxide dismutase family.

The protein resides in the virion. The protein localises to the host cytoplasm. Its function is as follows. Superoxide dismutase-like protein with no enzymatic activity. This chain is Cu-Zn superoxide dismutase-like protein OPG175 (OPG175), found in Vaccinia virus (strain Western Reserve) (VACV).